The primary structure comprises 525 residues: Nucleolar complex protein 4 homolog B (525 aa).

The span at 1–10 shows a compositional bias: basic residues; it reads MAARKAKHAF. The disordered stretch occupies residues 1-21; that stretch reads MAARKAKHAFRSQATQSDAER. Helical transmembrane passes span 307-327, 358-378, and 386-406; these read AAYDVGGAISLLALNGLFILI, FFHLANLFLSSTHLPVYLVAA, and LALTAPPQVLLMIIPFICNLI.

This sequence belongs to the CBF/MAK21 family.

Its subcellular location is the nucleus membrane. The protein localises to the nucleus. It is found in the nucleolus. This Xenopus laevis (African clawed frog) protein is Nucleolar complex protein 4 homolog B (noc4l-b).